The chain runs to 227 residues: MTDIAMLPESWREVLGGELQQPYFKELMEFVEEERANGPVYPPREEVFAALDATPFDRVKVLVLGQDPYHGEGQGHGLCFSVRPGVKVPPSLRNIYKEMHAELDTPIPDNGYLMPWAEQGVLLLNAVLTVRAGEANSHKSRGWELFTDAVIRAVAARTDPAVFVLWGNYAQKKLPLIDEARHVVVKGAHPSPLSAKKFFGSRPFTQINEAVAGQGHEPIDWTIPNLG.

Catalysis depends on aspartate 67, which acts as the Proton acceptor.

The protein belongs to the uracil-DNA glycosylase (UDG) superfamily. UNG family.

The protein localises to the cytoplasm. The catalysed reaction is Hydrolyzes single-stranded DNA or mismatched double-stranded DNA and polynucleotides, releasing free uracil.. Its function is as follows. Excises uracil residues from the DNA which can arise as a result of misincorporation of dUMP residues by DNA polymerase or due to deamination of cytosine. In Streptomyces coelicolor (strain ATCC BAA-471 / A3(2) / M145), this protein is Uracil-DNA glycosylase 2 (ung2).